A 490-amino-acid chain; its full sequence is MTKQSADSNAKSGVTAEICHWASNLATDDIPSDVLERAKYLILDGIACAWVGARVPWSEKYVQATMSFEPPGACRVIGYGQKLGPVAAAMTNSAFIQATELDDYHSEAPLHSASIVLPAVFAASEVLAEQGKTISGIDVILAAIVGFESGPRIGKAIYGSDLLNNGWHCGAVYGAPAGALATGKLLGLTPDSMEDALGIACTQACGLMSAQYGGMVKRVQHGFAARNGLLGGLLAYGGYEAMKGVLERSYGGFLKMFTKGNGREPPYKEEEVVAGLGSFWHTFTIRIKLYACCGLVHGPVEAIEKLQRRYPELLNRANLSNIRHVYVQLSTASNSHCGWIPEERPISSIAGQMSVAYILAVQLVDQQCLLAQFSEFDDNLERPEVWDLARKVTPSHSEEFDQDGNCLSAGRVRIEFNDGSSVTETVEKPLGVKEPMPNERILHKYRTLAGSVTDESRVKEIEDLVLSLDRLTDITPLLELLNCPVKSPLV.

It belongs to the PrpD family. As to quaternary structure, homodimer.

It is found in the mitochondrion. The enzyme catalyses cis-aconitate + H(+) = itaconate + CO2. Its function is as follows. Involved in the production of itaconic acid, a soluble unsaturated dicarboxylic acid mainly produced from sugars. This is Cis-aconitate decarboxylase (cad1) from Aspergillus terreus (strain NIH 2624 / FGSC A1156).